We begin with the raw amino-acid sequence, 158 residues long: MSSNVVETIQPVAAAIVSAHQFELVDLEFVREGQSWYLRLYIDKPGGINIEECAMVSDELSEKLDAMEPDPIPQAYFLEVSSPGAERPLKKEADFQNAIGKYVHVGLYQKLDGKKIFEGDLTAVTPTTLTIDYLDKTRHKTVTINREQISQARLAVKF.

This sequence belongs to the RimP family.

Its subcellular location is the cytoplasm. In terms of biological role, required for maturation of 30S ribosomal subunits. This Lactiplantibacillus plantarum (strain ATCC BAA-793 / NCIMB 8826 / WCFS1) (Lactobacillus plantarum) protein is Ribosome maturation factor RimP.